Reading from the N-terminus, the 263-residue chain is MYRFNGGGSMKHSIMVWVYVCLAAFTLAGKTLAYDVGAAVAFSEDPEDVWFNSVSQFVEIISSEPTWVQHFLNDYPNVGPYMWTEEEKGNDNFYADYTELSLVLGHGVVVVYPDGTKKSAIGFADRGYALPDDIRLGYASPDGFGYSVWTFIIQCSVLGDEYVDDWLQTLQGVHMVLGFASTATISNADFPELAYRLTGTGGYTREKVESAFFSTFLKSDGVHDDNRARIIAENSEVLDNDYLNSFERVPVDGSKIIVTGWVG.

This is an uncharacterized protein from Archaeoglobus fulgidus (strain ATCC 49558 / DSM 4304 / JCM 9628 / NBRC 100126 / VC-16).